Reading from the N-terminus, the 143-residue chain is Large ribosomal subunit protein uL15 (143 aa).

The segment at 1 to 56 is disordered; that stretch reads MQLNSIKPAAGAKHAKRRVGRGIGSGLGKTAGRGHKGQKSRAGGYHKVGFEGGQMP. A compositionally biased stretch (gly residues) spans 21–31; sequence RGIGSGLGKTA.

Belongs to the universal ribosomal protein uL15 family. As to quaternary structure, part of the 50S ribosomal subunit.

Binds to the 23S rRNA. This chain is Large ribosomal subunit protein uL15, found in Verminephrobacter eiseniae (strain EF01-2).